The chain runs to 261 residues: Oligodendrocyte transcription factor 1 (261 aa).

Residues 41-105 (PPISSSSSTS…LRRKINSRER (65 aa)) form a disordered region. The span at 44 to 56 (SSSSSTSSSSTAS) shows a compositional bias: low complexity. In terms of domain architecture, bHLH spans 95 to 154 (QLRRKINSRERKRMQDLNLAMDALREVILPYSAAHCQGAPGRKLSKIATLLLARNYILLL).

Expressed specifically in the brain, including the corpus callosum, hippocampal and cerebral white matter. Also detected in cells scattered in gray matter, most probably in oligodendrocytes.

Its subcellular location is the nucleus. Its function is as follows. Promotes formation and maturation of oligodendrocytes, especially within the brain. Cooperates with OLIG2 to establish the pMN domain of the embryonic neural tube. This chain is Oligodendrocyte transcription factor 1 (Olig1), found in Rattus norvegicus (Rat).